The following is a 334-amino-acid chain: Holliday junction branch migration complex subunit RuvB (334 aa).

A large ATPase domain (RuvB-L) region spans residues 1–179 (MTHKISVLHQ…FAFTGRVDYY (179 aa)). Residues Leu-18, Arg-19, Gly-60, Lys-63, Thr-64, Ser-65, 126–128 (EDF), Arg-169, Tyr-179, and Arg-216 contribute to the ATP site. Thr-64 contacts Mg(2+). The small ATPAse domain (RuvB-S) stretch occupies residues 180–250 (TDEDLVSILS…VAEKALAMLL (71 aa)). The tract at residues 253–334 (NLGLNEIDIK…RNPKDRWGEE (82 aa)) is head domain (RuvB-H). DNA contacts are provided by Arg-308 and Arg-313.

Belongs to the RuvB family. In terms of assembly, homohexamer. Forms an RuvA(8)-RuvB(12)-Holliday junction (HJ) complex. HJ DNA is sandwiched between 2 RuvA tetramers; dsDNA enters through RuvA and exits via RuvB. An RuvB hexamer assembles on each DNA strand where it exits the tetramer. Each RuvB hexamer is contacted by two RuvA subunits (via domain III) on 2 adjacent RuvB subunits; this complex drives branch migration. In the full resolvosome a probable DNA-RuvA(4)-RuvB(12)-RuvC(2) complex forms which resolves the HJ.

It is found in the cytoplasm. The catalysed reaction is ATP + H2O = ADP + phosphate + H(+). In terms of biological role, the RuvA-RuvB-RuvC complex processes Holliday junction (HJ) DNA during genetic recombination and DNA repair, while the RuvA-RuvB complex plays an important role in the rescue of blocked DNA replication forks via replication fork reversal (RFR). RuvA specifically binds to HJ cruciform DNA, conferring on it an open structure. The RuvB hexamer acts as an ATP-dependent pump, pulling dsDNA into and through the RuvAB complex. RuvB forms 2 homohexamers on either side of HJ DNA bound by 1 or 2 RuvA tetramers; 4 subunits per hexamer contact DNA at a time. Coordinated motions by a converter formed by DNA-disengaged RuvB subunits stimulates ATP hydrolysis and nucleotide exchange. Immobilization of the converter enables RuvB to convert the ATP-contained energy into a lever motion, pulling 2 nucleotides of DNA out of the RuvA tetramer per ATP hydrolyzed, thus driving DNA branch migration. The RuvB motors rotate together with the DNA substrate, which together with the progressing nucleotide cycle form the mechanistic basis for DNA recombination by continuous HJ branch migration. Branch migration allows RuvC to scan DNA until it finds its consensus sequence, where it cleaves and resolves cruciform DNA. The polypeptide is Holliday junction branch migration complex subunit RuvB (Chlamydia trachomatis serovar L2 (strain ATCC VR-902B / DSM 19102 / 434/Bu)).